A 128-amino-acid polypeptide reads, in one-letter code: Ribosome-binding factor A (128 aa).

It belongs to the RbfA family. In terms of assembly, monomer. Binds 30S ribosomal subunits, but not 50S ribosomal subunits or 70S ribosomes.

Its subcellular location is the cytoplasm. Functionally, one of several proteins that assist in the late maturation steps of the functional core of the 30S ribosomal subunit. Associates with free 30S ribosomal subunits (but not with 30S subunits that are part of 70S ribosomes or polysomes). Required for efficient processing of 16S rRNA. May interact with the 5'-terminal helix region of 16S rRNA. The polypeptide is Ribosome-binding factor A (Geobacillus thermodenitrificans (strain NG80-2)).